The primary structure comprises 201 residues: MEWVWALVLLAALGGGSAERDCRVSSFRVKENFDKARFSGLWYAIAKKDPEGLFLQDNIIAEFSVDEKGHMSATAKGRVRLLSNWEVCADMVGTFTDTEDPAKFKMKYWGVASFLQRGNDDHWIIDTDYDTFALQYSCRLQNLDGTCADSYSFVFSRDPNGLSPETRRLVRQRQEELCLERQYRWIEHNGYCQSRPSRNSL.

The first 18 residues, 1 to 18 (MEWVWALVLLAALGGGSA), serve as a signal peptide directing secretion. 3 disulfide bridges follow: Cys-22/Cys-178, Cys-88/Cys-192, and Cys-138/Cys-147. Residue Gln-116 participates in substrate binding. Arg-139 is modified (omega-N-methylarginine).

The protein belongs to the calycin superfamily. Lipocalin family. In terms of assembly, interacts with TTR. Interaction with TTR prevents its loss by filtration through the kidney glomeruli. Interacts with STRA6.

The protein resides in the secreted. Functionally, retinol-binding protein that mediates retinol transport in blood plasma. Delivers retinol from the liver stores to the peripheral tissues. Transfers the bound all-trans retinol to STRA6, that then facilitates retinol transport across the cell membrane. The protein is Retinol-binding protein 4 (Rbp4) of Mus musculus (Mouse).